Reading from the N-terminus, the 336-residue chain is 4-hydroxythreonine-4-phosphate dehydrogenase (336 aa).

The substrate site is built by H142 and T143. H172, H217, and H274 together coordinate a divalent metal cation. Positions 282, 291, and 300 each coordinate substrate.

This sequence belongs to the PdxA family. As to quaternary structure, homodimer. Requires Zn(2+) as cofactor. Mg(2+) is required as a cofactor. It depends on Co(2+) as a cofactor.

It is found in the cytoplasm. The catalysed reaction is 4-(phosphooxy)-L-threonine + NAD(+) = 3-amino-2-oxopropyl phosphate + CO2 + NADH. The protein operates within cofactor biosynthesis; pyridoxine 5'-phosphate biosynthesis; pyridoxine 5'-phosphate from D-erythrose 4-phosphate: step 4/5. In terms of biological role, catalyzes the NAD(P)-dependent oxidation of 4-(phosphooxy)-L-threonine (HTP) into 2-amino-3-oxo-4-(phosphooxy)butyric acid which spontaneously decarboxylates to form 3-amino-2-oxopropyl phosphate (AHAP). In Trichlorobacter lovleyi (strain ATCC BAA-1151 / DSM 17278 / SZ) (Geobacter lovleyi), this protein is 4-hydroxythreonine-4-phosphate dehydrogenase.